The sequence spans 483 residues: Malonate-semialdehyde dehydrogenase 2 (483 aa).

NAD(+) is bound by residues Phe-152, Lys-176, Glu-179, Arg-180, and Ser-229. Residue Cys-284 is the Nucleophile of the active site. Glu-384 is an NAD(+) binding site.

This sequence belongs to the aldehyde dehydrogenase family. IolA subfamily. In terms of assembly, homotetramer.

It carries out the reaction 3-oxopropanoate + NAD(+) + CoA + H2O = hydrogencarbonate + acetyl-CoA + NADH + H(+). The enzyme catalyses 2-methyl-3-oxopropanoate + NAD(+) + CoA + H2O = propanoyl-CoA + hydrogencarbonate + NADH + H(+). The protein operates within polyol metabolism; myo-inositol degradation into acetyl-CoA; acetyl-CoA from myo-inositol: step 7/7. In terms of biological role, catalyzes the oxidation of malonate semialdehyde (MSA) and methylmalonate semialdehyde (MMSA) into acetyl-CoA and propanoyl-CoA, respectively. Is involved in a myo-inositol catabolic pathway. Bicarbonate, and not CO2, is the end-product of the enzymatic reaction. The sequence is that of Malonate-semialdehyde dehydrogenase 2 from Bacillus mycoides (strain KBAB4) (Bacillus weihenstephanensis).